We begin with the raw amino-acid sequence, 1902 residues long: Plexin-B3 (1902 aa).

An N-terminal signal peptide occupies residues 1–36 (MLTDFLQAPVMAPWSPFSLHLLLLFLPLLPLTRVHR). Residues 37-461 (FSVPNTSFNH…TAQQVDRILV (425 aa)) enclose the Sema domain. The Extracellular portion of the chain corresponds to 37–1245 (FSVPNTSFNH…MMSTFPVEAQ (1209 aa)). A glycan (N-linked (GlcNAc...) asparagine) is linked at Asn41. Intrachain disulfides connect Cys88/Cys97 and Cys122/Cys130. An N-linked (GlcNAc...) asparagine glycan is attached at Asn221. Cystine bridges form between Cys257–Cys360, Cys273–Cys305, and Cys323–Cys347. The tract at residues 353–372 (DSPESYPCGDEHTPSPIAGR) is disordered. N-linked (GlcNAc...) asparagine glycans are attached at residues Asn416 and Asn469. The region spanning 463-515 (ACPQFPNCTTCLQARDPLCGWCILQGRCTRRGECGRAAQPNHWLWSYEDNHCP) is the PSI 1 domain. 5 cysteine pairs are disulfide-bonded: Cys464/Cys481, Cys470/Cys514, Cys473/Cys490, Cys484/Cys496, and Cys551/Cys569. 2 consecutive PSI domains span residues 609 to 671 (DCSA…EACP) and 776 to 822 (DCAM…QLCP). Asn791, Asn889, Asn910, Asn946, Asn1090, and Asn1207 each carry an N-linked (GlcNAc...) asparagine glycan. 4 consecutive IPT/TIG domains span residues 823-914 (IPSI…FTYQ), 915-1001 (DPVL…FRYT), 1003-1134 (NPQL…FLYQ), and 1154-1221 (KPGH…QMGN). A helical membrane pass occupies residues 1246–1266 (LGLGMGAAVLIAAVLLLTLMY). At 1267–1902 (RHKSKKALRD…ALVEYKVTDL (636 aa)) the chain is on the cytoplasmic side.

The protein belongs to the plexin family. As to quaternary structure, binds MET and MST1R. Interacts with RIT2/RIN. May form homodimers (via Sema domain). Interacts (via cytoplasmic domain) with FSCN1, ARHGDIA and RAC1. In terms of tissue distribution, expressed in brain (at protein level). In cerebellum, strongest expression detected in Purkinje and granular cells. Detected at very low levels in several fetal tissues, including dorsal root ganglia (DRG), heart, lung, optic bulb, brain and liver.

Its subcellular location is the cell membrane. Receptor for SEMA5A that plays a role in axon guidance, invasive growth and cell migration. Stimulates neurite outgrowth and mediates Ca(2+)/Mg(2+)-dependent cell aggregation. In glioma cells, SEMA5A stimulation of PLXNB3 results in the disassembly of F-actin stress fibers, disruption of focal adhesions and cellular collapse as well as inhibition of cell migration and invasion through ARHGDIA-mediated inactivation of RAC1. Seem to be non-essential for normal development and function of the central nervous system. The polypeptide is Plexin-B3 (Plxnb3) (Mus musculus (Mouse)).